A 223-amino-acid chain; its full sequence is Zinc-finger homeodomain protein 12 (223 aa).

Over residues 1–20 the composition is skewed to polar residues; that stretch reads MSSLSKPNRQFLSPTTNNQD. The interval 1–24 is disordered; the sequence is MSSLSKPNRQFLSPTTNNQDTGRE. The ZF-HD dimerization-type; degenerate zinc finger occupies 37–88; that stretch reads YNECLKNHAVSLGGHALDGCGEFTPKSTTILTDPPSLRCDACGCHRNFHRRS. Residues 147-204 constitute a DNA-binding region (homeobox; atypical); it reads KKHKRTKFTAEQKVKMRGFAERAGWKINGWDEKWVREFCSEVGIERKVLKVWIHNNKY.

As to quaternary structure, homo- and heterodimer with other ZFHD proteins. Interacts with ZHD11.

It is found in the nucleus. Its function is as follows. Putative transcription factor. The protein is Zinc-finger homeodomain protein 12 (ZHD12) of Arabidopsis thaliana (Mouse-ear cress).